Here is a 284-residue protein sequence, read N- to C-terminus: Tropomyosin beta chain (284 aa).

Residue Met-1 is modified to N-acetylmethionine. Positions 1–284 form a coiled coil; sequence MEAIKKKMQM…DNALNDITSL (284 aa). 2 stretches are compositionally biased toward basic and acidic residues: residues 22–40 and 51–66; these read AEQAEADKKQAEDRCKQLE and KGTEDEVEKYSESVKE. The disordered stretch occupies residues 22 to 66; the sequence is AEQAEADKKQAEDRCKQLEEEQQGLQKKLKGTEDEVEKYSESVKE.

Belongs to the tropomyosin family. As to quaternary structure, homodimer. Heterodimer of an alpha (TPM1, TPM3 or TPM4) and a beta (TPM2) chain.

The protein localises to the cytoplasm. Its subcellular location is the cytoskeleton. Functionally, binds to actin filaments in muscle and non-muscle cells. Plays a central role, in association with the troponin complex, in the calcium dependent regulation of vertebrate striated muscle contraction. Smooth muscle contraction is regulated by interaction with caldesmon. In non-muscle cells is implicated in stabilizing cytoskeleton actin filaments. This chain is Tropomyosin beta chain (TPM2), found in Gallus gallus (Chicken).